A 185-amino-acid chain; its full sequence is MIVIVTGMPGSGKSKIVKEFEKRGFPSVSLGDIVREETLKRGLELTKENVAKVSIRLRQELGQNAVAKLAVEKVRALLKGSQVVVIDGVRSLDEVGTFRGAFPEENIIIVAVHTPPRQRFERLKARGRHDDPQTWEDFEERDWKELRFGIGGVIAMADYMLVNNGSREEYEAEVKKLVDEIISKL.

Glycine 7–serine 14 contacts ATP.

Belongs to the UPF0200 family.

The sequence is that of UPF0200 protein TK1334 from Thermococcus kodakarensis (strain ATCC BAA-918 / JCM 12380 / KOD1) (Pyrococcus kodakaraensis (strain KOD1)).